The following is a 185-amino-acid chain: ATP synthase subunit b, chloroplastic (185 aa).

A helical membrane pass occupies residues Ser7–Ala29.

The protein belongs to the ATPase B chain family. In terms of assembly, F-type ATPases have 2 components, F(1) - the catalytic core - and F(0) - the membrane proton channel. F(1) has five subunits: alpha(3), beta(3), gamma(1), delta(1), epsilon(1). F(0) has four main subunits: a(1), b(1), b'(1) and c(10-14). The alpha and beta chains form an alternating ring which encloses part of the gamma chain. F(1) is attached to F(0) by a central stalk formed by the gamma and epsilon chains, while a peripheral stalk is formed by the delta, b and b' chains.

The protein localises to the plastid. The protein resides in the chloroplast thylakoid membrane. F(1)F(0) ATP synthase produces ATP from ADP in the presence of a proton or sodium gradient. F-type ATPases consist of two structural domains, F(1) containing the extramembraneous catalytic core and F(0) containing the membrane proton channel, linked together by a central stalk and a peripheral stalk. During catalysis, ATP synthesis in the catalytic domain of F(1) is coupled via a rotary mechanism of the central stalk subunits to proton translocation. Functionally, component of the F(0) channel, it forms part of the peripheral stalk, linking F(1) to F(0). The chain is ATP synthase subunit b, chloroplastic from Dioscorea elephantipes (Elephant's foot yam).